A 1101-amino-acid polypeptide reads, in one-letter code: Type II inositol polyphosphate 5-phosphatase 15 (1101 aa).

Residues 31–40 (RSAYSSSSSS) show a composition bias toward low complexity. Residues 31 to 54 (RSAYSSSSSSGDDESQPSVDDSNK) form a disordered region. WD repeat units follow at residues 121 to 162 (LRET…GSGR), 180 to 219 (FGSA…GIEE), 225 to 263 (AHRG…GKSL), 403 to 432 (DDSR…MRWD), 433 to 481 (GNGN…GGWV), and 483 to 519 (HSGP…PLDN). Catalytic regions lie at residues 749 to 765 (DMVI…DDIT) and 828 to 843 (KKRI…YRDN). K907 participates in a covalent cross-link: Glycyl lysine isopeptide (Lys-Gly) (interchain with G-Cter in ubiquitin).

This sequence belongs to the inositol polyphosphate 5-phosphatase family. It depends on Mg(2+) as a cofactor. In terms of tissue distribution, predominantly expressed in interfascicular fibers and vascular bundles. Expressed in seedlings, stems, roots and flowers. Expressed at lower level in mature leaves.

The catalysed reaction is a 1,2-diacyl-sn-glycero-3-phospho-(1D-myo-inositol-4,5-bisphosphate) + H2O = a 1,2-diacyl-sn-glycero-3-phospho-(1D-myo-inositol 4-phosphate) + phosphate. It catalyses the reaction a 1,2-diacyl-sn-glycero-3-phospho-(1D-myo-inositol-3,4,5-trisphosphate) + H2O = a 1,2-diacyl-sn-glycero-3-phospho-(1D-myo-inositol-3,4-bisphosphate) + phosphate. It carries out the reaction 1D-myo-inositol 1,4,5-trisphosphate + H2O = 1D-myo-inositol 1,4-bisphosphate + phosphate. Functionally, has phosphatase activity toward PtdIns(4,5)P2, PtdIns(3,4,5)P3 and Ins(1,4,5)P3. Has a higher substrate affinity toward PtdIns(4,5)P2. Required for secondary wall synthesis and actin organization in fiber cells. This is Type II inositol polyphosphate 5-phosphatase 15 from Arabidopsis thaliana (Mouse-ear cress).